Reading from the N-terminus, the 156-residue chain is MIVYGLYKSPFGPITVAKNEKGFVMLDFCDCAERSSLDNDYFTDFFYKLDLYFEGKKVDLTEPVDFKPFNEFRIRVFKEVMRIKWGEVRTYKQVADAVKTSPRAVGTALSKNNVLLIIPCHRVIGEKSLGGYSRGVELKRKLLELEGIDVAKFIEK.

C120 acts as the Nucleophile; methyl group acceptor in catalysis.

This sequence belongs to the MGMT family.

It is found in the cytoplasm. It carries out the reaction a 6-O-methyl-2'-deoxyguanosine in DNA + L-cysteinyl-[protein] = S-methyl-L-cysteinyl-[protein] + a 2'-deoxyguanosine in DNA. It catalyses the reaction a 4-O-methyl-thymidine in DNA + L-cysteinyl-[protein] = a thymidine in DNA + S-methyl-L-cysteinyl-[protein]. In terms of biological role, involved in the cellular defense against the biological effects of O6-methylguanine (O6-MeG) and O4-methylthymine (O4-MeT) in DNA. Repairs the methylated nucleobase in DNA by stoichiometrically transferring the methyl group to a cysteine residue in the enzyme. This is a suicide reaction: the enzyme is irreversibly inactivated. The chain is Methylated-DNA--protein-cysteine methyltransferase from Sulfurisphaera tokodaii (strain DSM 16993 / JCM 10545 / NBRC 100140 / 7) (Sulfolobus tokodaii).